Reading from the N-terminus, the 253-residue chain is MKTQWSEILTPLLLLLLGLLHVSWAQSSCTGSPGIPGVPGIPGVPGSDGKPGTPGIKGEKGLPGLAGDHGELGEKGDAGIPGIPGKVGPKGPVGPKGAPGPPGPRGPKGGSGDYKATQKVAFSALRTVNSALRPNQAIRFEKVITNVNDNYEPRSGKFTCKVPGLYYFTYHASSRGNLCVNIVRGRDRDRMQKVLTFCDYAQNTFQVTTGGVVLKLEQEEVVHLQATDKNSLLGVEGANSIFTGFLLFPDMDV.

The first 25 residues, 1–25, serve as a signal peptide directing secretion; sequence MKTQWSEILTPLLLLLLGLLHVSWA. Gln26 bears the Pyrrolidone carboxylic acid mark. One can recognise a Collagen-like domain in the interval 29-112; the sequence is CTGSPGIPGV…GPRGPKGGSG (84 aa). The interval 29-114 is disordered; it reads CTGSPGIPGV…RGPKGGSGDY (86 aa). 5 positions are modified to 4-hydroxyproline: Pro33, Pro36, Pro39, Pro51, and Pro54. 2 positions are modified to 5-hydroxylysine: Lys57 and Lys60. A 4-hydroxyproline modification is found at Pro63. Residues 68-77 are compositionally biased toward basic and acidic residues; it reads DHGELGEKGD. Residue Lys75 is modified to 5-hydroxylysine. Residues 78 to 96 are compositionally biased toward low complexity; sequence AGIPGIPGKVGPKGPVGPK. 2 positions are modified to 4-hydroxyproline: Pro81 and Pro84. 5-hydroxylysine is present on residues Lys90 and Lys96. 4-hydroxyproline is present on residues Pro99 and Pro102. Lys108 is subject to 5-hydroxylysine. One can recognise a C1q domain in the interval 115 to 253; that stretch reads KATQKVAFSA…GFLLFPDMDV (139 aa). Cys179 and Cys198 are oxidised to a cystine. Residues Asp199, Tyr200, and Gln206 each contribute to the Ca(2+) site.

Core component of the complement C1 complex, a calcium-dependent complex composed of 1 molecule of the C1Q subcomplex, 2 molecules of C1R and 2 molecules of C1S. The C1Q subcomplex is composed 18 subunits: 3 chains of C1QA, C1QB, and C1QC trimerize to form 6 collagen-like triple helices connected to six globular ligand-recognition modules (C1q domain). Hydroxylated on lysine and proline residues. Hydroxylated lysine residues can be glycosylated. Human C1Q contains up to 68.3 hydroxylysine-galactosylglucose residues and up to 2.5 hydroxylysine-galactose per molecule. Total percentage hydroxylysine residues glycosylated is 86.4%. In terms of tissue distribution, highest levels in spleen, lung and brain. Weaker expression in kidney and liver. In the spleen, localized mainly to the red pulp, in cells mainly of monocyte-macrophage lineage. In white pulp, localized in specific dendritic cells such as those from the periarteriolar lymphatic sheath (PALS).

The protein localises to the secreted. It is found in the cell surface. Its activity is regulated as follows. The C1Q subcomplex is inhibited by sulfated molecules, such as triterpenoid sulfates, heparan sulfate, or chondroitin sulfates. Core component of the complement C1 complex, a multiprotein complex that initiates the classical pathway of the complement system, a cascade of proteins that leads to phagocytosis and breakdown of pathogens and signaling that strengthens the adaptive immune system. The classical complement pathway is initiated by the C1Q subcomplex of the C1 complex, which specifically binds IgG or IgM immunoglobulins complexed with antigens, forming antigen-antibody complexes on the surface of pathogens: C1QA, together with C1QB and C1QC, specifically recognizes and binds the Fc regions of IgG or IgM via its C1q domain. Immunoglobulin-binding activates the proenzyme C1R, which cleaves C1S, initiating the proteolytic cascade of the complement system. The C1Q subcomplex is activated by a hexamer of IgG complexed with antigens, while it is activated by a pentameric IgM. The C1Q subcomplex also recognizes and binds phosphatidylserine exposed on the surface of cells undergoing programmed cell death, possibly promoting activation of the complement system. This Rattus norvegicus (Rat) protein is Complement C1q subcomponent subunit B.